The following is a 416-amino-acid chain: Photosystem II stability/assembly factor HCF136, chloroplastic (416 aa).

The N-terminal 36 residues, 1 to 36, are a transit peptide targeting the chloroplast; the sequence is MATTASLHLHLHLLLSSSRRRCRLLVPRAHTDSIST. The N-terminal 31 residues, 37–67, are a transit peptide targeting the thylakoid; that stretch reads GRRRFIADTATASAAAAVGPLVLPRTPLARA.

Belongs to the Ycf48 family.

Its subcellular location is the plastid. The protein resides in the chloroplast thylakoid lumen. Essential for photosystem II (PSII) biogenesis; required for assembly of an early intermediate in PSII assembly that includes D2 (psbD) and cytochrome b559. The chain is Photosystem II stability/assembly factor HCF136, chloroplastic (HCF136) from Oryza sativa subsp. japonica (Rice).